The chain runs to 366 residues: Histidinol-phosphate aminotransferase (366 aa).

The residue at position 226 (K226) is an N6-(pyridoxal phosphate)lysine.

The protein belongs to the class-II pyridoxal-phosphate-dependent aminotransferase family. Histidinol-phosphate aminotransferase subfamily. Pyridoxal 5'-phosphate serves as cofactor.

It catalyses the reaction L-histidinol phosphate + 2-oxoglutarate = 3-(imidazol-4-yl)-2-oxopropyl phosphate + L-glutamate. The protein operates within amino-acid biosynthesis; L-histidine biosynthesis; L-histidine from 5-phospho-alpha-D-ribose 1-diphosphate: step 7/9. The polypeptide is Histidinol-phosphate aminotransferase (Methanosarcina barkeri (strain Fusaro / DSM 804)).